The chain runs to 901 residues: Pantothenate kinase 2 (901 aa).

Residues 1-10 (MAGQEDEYDP) show a composition bias toward acidic residues. Residues 1-50 (MAGQEDEYDPILDNKREAEAKSQVSVAADKNMAPSTSGTPIHRSGSRPQL) form a disordered region. Residues 1 to 466 (MAGQEDEYDP…LGDLDEKISW (466 aa)) are pantothenate kinase. The 4'-phosphopantetheine phosphatase stretch occupies residues 467 to 901 (MEKFVRRGTE…CVCRYEPPSL (435 aa)). Residues Asp-731, Asn-732, and Asp-767 each coordinate Mn(2+). A Subfamily II EGMGR motif motif is present at residues 851–855 (EGMGR).

This sequence in the N-terminal section; belongs to the type II pantothenate kinase family. In the C-terminal section; belongs to the damage-control phosphatase family. Phosphopantetheine phosphatase II subfamily. Mn(2+) serves as cofactor. Ni(2+) is required as a cofactor. Highly expressed in leaves and developing seeds. Expressed in roots, stems and flowers.

The catalysed reaction is (R)-pantothenate + ATP = (R)-4'-phosphopantothenate + ADP + H(+). It catalyses the reaction (R)-4'-phosphopantothenate + H2O = (R)-pantothenate + phosphate. The enzyme catalyses (R)-4'-phosphopantetheine + H2O = (R)-pantetheine + phosphate. It carries out the reaction (R)-4'-phosphopantetheine sulfonate + H2O = (R)-pantetheine sulfonate + phosphate. The protein operates within cofactor biosynthesis; coenzyme A biosynthesis; CoA from (R)-pantothenate: step 1/5. With respect to regulation, activity is strongly promoted by Co(2+), Ni(2+) and Mn(2+). Activity is inhibited by EDTA. Catalyzes the phosphorylation of pantothenate the first step in CoA biosynthesis. May play a role in the physiological regulation of the intracellular CoA concentration. Functionally redudant with PANK1. The phosphatase activity shows preference for normal or oxidatively damaged intermediates of 4'-phosphopantetheine, which provides strong indirect evidence that the phosphatase activity pre-empts damage in the CoA pathway. Hydrolyzing excess 4'-phosphopantetheine could constitute a directed overflow mechanism to prevent its oxidation to the S-sulfonate, sulfonate, or other forms. Hydrolyzing 4'-phosphopantetheine sulfonate or S-sulfonate would forestall their conversion to inactive forms of CoA and acyl carrier protein. This chain is Pantothenate kinase 2 (PANK2), found in Arabidopsis thaliana (Mouse-ear cress).